The following is a 280-amino-acid chain: Putative ABC transporter ATP-binding protein PYRAB03730 (280 aa).

The ABC transporter domain occupies 4–244 (IEVENVSFKY…VEFLERIGIR (241 aa)). 38 to 45 (GPSGSGKS) lines the ATP pocket.

This sequence belongs to the ABC transporter superfamily.

Its subcellular location is the cell membrane. Probably part of an ABC transporter complex. Responsible for energy coupling to the transport system. This chain is Putative ABC transporter ATP-binding protein PYRAB03730, found in Pyrococcus abyssi (strain GE5 / Orsay).